The following is a 170-amino-acid chain: Photosystem I assembly protein Ycf3 (170 aa).

TPR repeat units lie at residues 35–68 (AFTY…EIDP), 72–105 (SYIL…NPFL), and 120–153 (GEQA…TPGN).

Belongs to the Ycf3 family.

The protein localises to the plastid. Its subcellular location is the chloroplast thylakoid membrane. Functionally, essential for the assembly of the photosystem I (PSI) complex. May act as a chaperone-like factor to guide the assembly of the PSI subunits. The protein is Photosystem I assembly protein Ycf3 of Triticum aestivum (Wheat).